A 201-amino-acid polypeptide reads, in one-letter code: FMN-dependent NADH:quinone oxidoreductase (201 aa).

FMN is bound by residues S10, 16 to 18 (SQS), and 96 to 99 (MYNF).

It belongs to the azoreductase type 1 family. As to quaternary structure, homodimer. Requires FMN as cofactor.

It catalyses the reaction 2 a quinone + NADH + H(+) = 2 a 1,4-benzosemiquinone + NAD(+). It carries out the reaction N,N-dimethyl-1,4-phenylenediamine + anthranilate + 2 NAD(+) = 2-(4-dimethylaminophenyl)diazenylbenzoate + 2 NADH + 2 H(+). In terms of biological role, quinone reductase that provides resistance to thiol-specific stress caused by electrophilic quinones. Also exhibits azoreductase activity. Catalyzes the reductive cleavage of the azo bond in aromatic azo compounds to the corresponding amines. In Sodalis glossinidius (strain morsitans), this protein is FMN-dependent NADH:quinone oxidoreductase.